We begin with the raw amino-acid sequence, 324 residues long: Glyoxylate/hydroxypyruvate reductase B (324 aa).

Catalysis depends on residues R237 and E266. H285 serves as the catalytic Proton donor.

Belongs to the D-isomer specific 2-hydroxyacid dehydrogenase family. GhrB subfamily. As to quaternary structure, homodimer.

Its subcellular location is the cytoplasm. It carries out the reaction glycolate + NADP(+) = glyoxylate + NADPH + H(+). The catalysed reaction is (R)-glycerate + NAD(+) = 3-hydroxypyruvate + NADH + H(+). The enzyme catalyses (R)-glycerate + NADP(+) = 3-hydroxypyruvate + NADPH + H(+). Functionally, catalyzes the NADPH-dependent reduction of glyoxylate and hydroxypyruvate into glycolate and glycerate, respectively. The polypeptide is Glyoxylate/hydroxypyruvate reductase B (Salmonella dublin (strain CT_02021853)).